Here is a 359-residue protein sequence, read N- to C-terminus: Photosystem II protein D1 2 (359 aa).

Helical transmembrane passes span 29–46 (YVGW…AATT), 118–133 (HFLI…EWEL), and 142–156 (WICV…AASA). His-118 contributes to the chlorophyll a binding site. Residue Tyr-126 participates in pheophytin a binding. [CaMn4O5] cluster is bound by residues Asp-170 and Glu-189. A helical membrane pass occupies residues 197–218 (FHMLGVAGVFGGSLFSAMHGSL). His-198 contacts chlorophyll a. Residues His-215 and 264-265 (SF) each bind a quinone. A Fe cation-binding site is contributed by His-215. Fe cation is bound at residue His-272. Residues 274-288 (FLAAWPVVGIWFTAL) traverse the membrane as a helical segment. The [CaMn4O5] cluster site is built by His-332, Glu-333, Asp-342, and Ala-344. A propeptide spanning residues 345–359 (AAESTPVALQAPAIG) is cleaved from the precursor.

This sequence belongs to the reaction center PufL/M/PsbA/D family. PSII is composed of 1 copy each of membrane proteins PsbA, PsbB, PsbC, PsbD, PsbE, PsbF, PsbH, PsbI, PsbJ, PsbK, PsbL, PsbM, PsbT, PsbX, PsbY, PsbZ, Psb30/Ycf12, peripheral proteins PsbO, CyanoQ (PsbQ), PsbU, PsbV and a large number of cofactors. It forms dimeric complexes. It depends on The D1/D2 heterodimer binds P680, chlorophylls that are the primary electron donor of PSII, and subsequent electron acceptors. It shares a non-heme iron and each subunit binds pheophytin, quinone, additional chlorophylls, carotenoids and lipids. D1 provides most of the ligands for the Mn4-Ca-O5 cluster of the oxygen-evolving complex (OEC). There is also a Cl(-1) ion associated with D1 and D2, which is required for oxygen evolution. The PSII complex binds additional chlorophylls, carotenoids and specific lipids. as a cofactor. In terms of processing, tyr-161 forms a radical intermediate that is referred to as redox-active TyrZ, YZ or Y-Z. Post-translationally, C-terminally processed by CtpA; processing is essential to allow assembly of the oxygen-evolving complex and thus photosynthetic growth.

The protein resides in the cellular thylakoid membrane. It catalyses the reaction 2 a plastoquinone + 4 hnu + 2 H2O = 2 a plastoquinol + O2. Its function is as follows. Photosystem II (PSII) is a light-driven water:plastoquinone oxidoreductase that uses light energy to abstract electrons from H(2)O, generating O(2) and a proton gradient subsequently used for ATP formation. It consists of a core antenna complex that captures photons, and an electron transfer chain that converts photonic excitation into a charge separation. The D1/D2 (PsbA/PsbD) reaction center heterodimer binds P680, the primary electron donor of PSII as well as several subsequent electron acceptors. In Synechococcus sp. (strain CC9311), this protein is Photosystem II protein D1 2.